Consider the following 211-residue polypeptide: Imidazole glycerol phosphate synthase subunit HisH (211 aa).

Residues 4-211 enclose the Glutamine amidotransferase type-1 domain; sequence RVVILDYGSG…QLLANWVATL (208 aa). Cys-82 acts as the Nucleophile in catalysis. Residues His-192 and Glu-194 contribute to the active site.

In terms of assembly, heterodimer of HisH and HisF.

It is found in the cytoplasm. The enzyme catalyses 5-[(5-phospho-1-deoxy-D-ribulos-1-ylimino)methylamino]-1-(5-phospho-beta-D-ribosyl)imidazole-4-carboxamide + L-glutamine = D-erythro-1-(imidazol-4-yl)glycerol 3-phosphate + 5-amino-1-(5-phospho-beta-D-ribosyl)imidazole-4-carboxamide + L-glutamate + H(+). The catalysed reaction is L-glutamine + H2O = L-glutamate + NH4(+). Its pathway is amino-acid biosynthesis; L-histidine biosynthesis; L-histidine from 5-phospho-alpha-D-ribose 1-diphosphate: step 5/9. Functionally, IGPS catalyzes the conversion of PRFAR and glutamine to IGP, AICAR and glutamate. The HisH subunit catalyzes the hydrolysis of glutamine to glutamate and ammonia as part of the synthesis of IGP and AICAR. The resulting ammonia molecule is channeled to the active site of HisF. The polypeptide is Imidazole glycerol phosphate synthase subunit HisH (Thermobifida fusca (strain YX)).